The following is a 298-amino-acid chain: MLYQQIASNKRKTVYVMIGFAILVLFIGAAVGYVFYDSAMAGIIMAAVIAAIYMAMMIANSTNVVMGMNHATEISEADHPEIWHIVEDMALVANIPMPKVYIVNDASPNAFATGNSPKNAAVAVTTGILERLNREELEGVIGHEVSHIRNYDIRLSTIALALSSAIAMLVNIGMRSFWWGGGRRRNDNDNEGGSLEIVMMIISIVLVILGPIATTIAQLALSRNREYLADASSVELTRNPLGLIHALQKISVSEPMKEADPSSAALYISDPFKKKRTMAHLFDTHPPIEDRIQRLERM.

The next 2 membrane-spanning stretches (helical) occupy residues 15-35 and 39-59; these read YVMI…GYVF and AMAG…MMIA. Histidine 143 lines the Zn(2+) pocket. Glutamate 144 is an active-site residue. Position 147 (histidine 147) interacts with Zn(2+). The next 2 helical transmembrane spans lie at 158–178 and 197–217; these read IALA…RSFW and IVMM…TTIA. A Zn(2+)-binding site is contributed by glutamate 226.

This sequence belongs to the peptidase M48B family. Zn(2+) serves as cofactor.

It localises to the cell membrane. This is Protease HtpX homolog from Pediococcus pentosaceus (strain ATCC 25745 / CCUG 21536 / LMG 10740 / 183-1w).